We begin with the raw amino-acid sequence, 358 residues long: Protein-glutamate methylesterase/protein-glutamine glutaminase 2 (358 aa).

Residues 7–124 (SVLLVDDSAV…KNFLIESAAE (118 aa)) enclose the Response regulatory domain. At D58 the chain carries 4-aspartylphosphate. One can recognise a CheB-type methylesterase domain in the interval 170–358 (AQTTERIVAI…QEIHQAILHR (189 aa)). Catalysis depends on residues S182, H208, and D304.

The protein belongs to the CheB family. Post-translationally, phosphorylated by CheA. Phosphorylation of the N-terminal regulatory domain activates the methylesterase activity.

It is found in the cytoplasm. It carries out the reaction [protein]-L-glutamate 5-O-methyl ester + H2O = L-glutamyl-[protein] + methanol + H(+). The catalysed reaction is L-glutaminyl-[protein] + H2O = L-glutamyl-[protein] + NH4(+). Involved in chemotaxis. Part of a chemotaxis signal transduction system that modulates chemotaxis in response to various stimuli. Catalyzes the demethylation of specific methylglutamate residues introduced into the chemoreceptors (methyl-accepting chemotaxis proteins or MCP) by CheR. Also mediates the irreversible deamidation of specific glutamine residues to glutamic acid. The polypeptide is Protein-glutamate methylesterase/protein-glutamine glutaminase 2 (Pseudomonas syringae pv. tomato (strain ATCC BAA-871 / DC3000)).